We begin with the raw amino-acid sequence, 353 residues long: MLIFPLLNDLSRKIIHIDMDAFFAAVEIKDNPKLRGKPVIIGSDPRQTGGRGVVSTCSYEARAFGVHSAMSSKEAYERCPQAVFISGNYEKYKAVGLQIRAIFKRYTDLIEPMSIDEAYLDVTENKLGIKSAVKIARLIQKDIWQELHLTASAGISYNKFLAKMASDYQKPHGLTVILPEQAEDFLKQMDISKFHGVGKKTVERLHQMGVFTGADLLEVPEVTLIDRFGRLGYDLYRKARGIHNSPVKSNRIRKSIGKEKTYGKILRAEEDIKKELTLLSEKVALNLHQQEKAGKIVILKIRYEDFSTLTKRKSIAQKTQDASQISQIALQLYEELSEKERGVRLLGITMTGF.

The UmuC domain occupies 14 to 198 (IIHIDMDAFF…MDISKFHGVG (185 aa)). 2 residues coordinate Mg(2+): Asp18 and Asp116. Glu117 is a catalytic residue.

The protein belongs to the DNA polymerase type-Y family. Monomer. Requires Mg(2+) as cofactor.

It localises to the cytoplasm. The catalysed reaction is DNA(n) + a 2'-deoxyribonucleoside 5'-triphosphate = DNA(n+1) + diphosphate. Functionally, poorly processive, error-prone DNA polymerase involved in untargeted mutagenesis. Copies undamaged DNA at stalled replication forks, which arise in vivo from mismatched or misaligned primer ends. These misaligned primers can be extended by PolIV. Exhibits no 3'-5' exonuclease (proofreading) activity. May be involved in translesional synthesis, in conjunction with the beta clamp from PolIII. The polypeptide is DNA polymerase IV (Streptococcus pneumoniae serotype 2 (strain D39 / NCTC 7466)).